Consider the following 75-residue polypeptide: ATP synthase subunit c (75 aa).

The next 2 membrane-spanning stretches (helical) occupy residues 9-29 (IGAG…GIIF) and 54-74 (FALA…ILFA).

Belongs to the ATPase C chain family. F-type ATPases have 2 components, F(1) - the catalytic core - and F(0) - the membrane proton channel. F(1) has five subunits: alpha(3), beta(3), gamma(1), delta(1), epsilon(1). F(0) has three main subunits: a(1), b(2) and c(10-14). The alpha and beta chains form an alternating ring which encloses part of the gamma chain. F(1) is attached to F(0) by a central stalk formed by the gamma and epsilon chains, while a peripheral stalk is formed by the delta and b chains.

The protein localises to the cell inner membrane. Its function is as follows. F(1)F(0) ATP synthase produces ATP from ADP in the presence of a proton or sodium gradient. F-type ATPases consist of two structural domains, F(1) containing the extramembraneous catalytic core and F(0) containing the membrane proton channel, linked together by a central stalk and a peripheral stalk. During catalysis, ATP synthesis in the catalytic domain of F(1) is coupled via a rotary mechanism of the central stalk subunits to proton translocation. In terms of biological role, key component of the F(0) channel; it plays a direct role in translocation across the membrane. A homomeric c-ring of between 10-14 subunits forms the central stalk rotor element with the F(1) delta and epsilon subunits. The sequence is that of ATP synthase subunit c from Pelagibacter ubique (strain HTCC1062).